The sequence spans 213 residues: Phosphoribosyl-dephospho-CoA transferase (213 aa).

Residues Asp135 and Asp137 contribute to the active site.

It belongs to the MdcG family.

It carries out the reaction apo-[malonate decarboxylase ACP] + 2'-(5''-triphospho-alpha-D-ribosyl)-3'-dephospho-CoA = holo-[malonate decarboxylase ACP] + diphosphate. Its function is as follows. Transfers 2'-(5-triphosphoribosyl)-3'-dephosphocoenzyme-A to the apo-[acyl-carrier-protein] of the malonate decarboxylase to yield holo-[acyl-carrier-protein]. The protein is Phosphoribosyl-dephospho-CoA transferase of Xanthomonas euvesicatoria pv. vesicatoria (strain 85-10) (Xanthomonas campestris pv. vesicatoria).